A 286-amino-acid polypeptide reads, in one-letter code: MEKRENPYLRYLRRERLPHIFCAGCGNGIVLNSFFKGMEMAGIDFDNIAMVSGIGCSSRIPGYVNCDSLHTTHGRPISFATGLKLGNPSLDVVVFTGDGDAAAIGGNHLIHGARRNIDMTVICINNSIYGMTGGQISPTFPEGSYGSTAPYGALEDPFDLAELVTAAGASYVARWTTAHPLQLANSIKKGLKNRGFSFIEAISQCPTYFGRKNRMRSPVEMMRFMKENSLNRRKALKMEPDEVEGKIIVGEFANRPQPELCEKICSMVDEKSGRALDMIRSAYRDD.

In terms of assembly, heterotetramer of the KorA, KorB, KorC and KorD subunits.

It carries out the reaction 2 oxidized [2Fe-2S]-[ferredoxin] + 2-oxoglutarate + CoA = succinyl-CoA + 2 reduced [2Fe-2S]-[ferredoxin] + CO2 + H(+). The protein is 2-oxoglutarate synthase subunit KorB (korB) of Methanothermobacter thermautotrophicus (strain ATCC 29096 / DSM 1053 / JCM 10044 / NBRC 100330 / Delta H) (Methanobacterium thermoautotrophicum).